Consider the following 178-residue polypeptide: ATP-dependent protease subunit HslV (178 aa).

Residue threonine 7 is part of the active site. Positions 162, 165, and 168 each coordinate Na(+).

This sequence belongs to the peptidase T1B family. HslV subfamily. In terms of assembly, a double ring-shaped homohexamer of HslV is capped on each side by a ring-shaped HslU homohexamer. The assembly of the HslU/HslV complex is dependent on binding of ATP.

The protein localises to the cytoplasm. It carries out the reaction ATP-dependent cleavage of peptide bonds with broad specificity.. With respect to regulation, allosterically activated by HslU binding. Its function is as follows. Protease subunit of a proteasome-like degradation complex believed to be a general protein degrading machinery. In Ralstonia nicotianae (strain ATCC BAA-1114 / GMI1000) (Ralstonia solanacearum), this protein is ATP-dependent protease subunit HslV.